Here is a 293-residue protein sequence, read N- to C-terminus: 4-hydroxybenzoate octaprenyltransferase (293 aa).

Helical transmembrane passes span 26–46, 49–69, 102–122, 148–168, 173–193, 217–237, 240–260, and 272–292; these read IGTLLLLWPCLMALLFAAKGM, IKVLLIFILGVVIMRACGCII, LFALLGLLAFALVLLLNPLVV, FLGIVWSWSIPMAYAAQLGEV, WWLFAANWCWTVAYDTMYAMI, WIAVFQLMAFGCFLMAGLSAE, FIYALGLLGFIAFSVYQQRLI, and FLNNNWVGMLLFLTLAADYLL.

This sequence belongs to the UbiA prenyltransferase family. The cofactor is Mg(2+).

Its subcellular location is the cell inner membrane. It catalyses the reaction all-trans-octaprenyl diphosphate + 4-hydroxybenzoate = 4-hydroxy-3-(all-trans-octaprenyl)benzoate + diphosphate. The protein operates within cofactor biosynthesis; ubiquinone biosynthesis. Functionally, catalyzes the prenylation of para-hydroxybenzoate (PHB) with an all-trans polyprenyl group. Mediates the second step in the final reaction sequence of ubiquinone-8 (UQ-8) biosynthesis, which is the condensation of the polyisoprenoid side chain with PHB, generating the first membrane-bound Q intermediate 3-octaprenyl-4-hydroxybenzoate. The chain is 4-hydroxybenzoate octaprenyltransferase from Shewanella denitrificans (strain OS217 / ATCC BAA-1090 / DSM 15013).